The primary structure comprises 208 residues: Pyridoxine/pyridoxamine 5'-phosphate oxidase (208 aa).

Residues 55–60 (RMVLLK), 70–71 (YT), Lys76, Lys77, and Gln99 each bind FMN. Substrate is bound at residue Lys60. Residues Tyr117, Arg121, and Ser125 each contribute to the substrate site. Residues 134-135 (QS) and Trp179 each bind FMN. 185 to 187 (RLH) contributes to the substrate binding site. Residue Arg189 participates in FMN binding.

Belongs to the pyridoxamine 5'-phosphate oxidase family. Homodimer. Requires FMN as cofactor.

It catalyses the reaction pyridoxamine 5'-phosphate + O2 + H2O = pyridoxal 5'-phosphate + H2O2 + NH4(+). The enzyme catalyses pyridoxine 5'-phosphate + O2 = pyridoxal 5'-phosphate + H2O2. It participates in cofactor metabolism; pyridoxal 5'-phosphate salvage; pyridoxal 5'-phosphate from pyridoxamine 5'-phosphate: step 1/1. It functions in the pathway cofactor metabolism; pyridoxal 5'-phosphate salvage; pyridoxal 5'-phosphate from pyridoxine 5'-phosphate: step 1/1. Its function is as follows. Catalyzes the oxidation of either pyridoxine 5'-phosphate (PNP) or pyridoxamine 5'-phosphate (PMP) into pyridoxal 5'-phosphate (PLP). The sequence is that of Pyridoxine/pyridoxamine 5'-phosphate oxidase from Brucella ovis (strain ATCC 25840 / 63/290 / NCTC 10512).